Here is a 123-residue protein sequence, read N- to C-terminus: Ribosome-binding factor A (123 aa).

This sequence belongs to the RbfA family. As to quaternary structure, monomer. Binds 30S ribosomal subunits, but not 50S ribosomal subunits or 70S ribosomes.

It is found in the cytoplasm. One of several proteins that assist in the late maturation steps of the functional core of the 30S ribosomal subunit. Associates with free 30S ribosomal subunits (but not with 30S subunits that are part of 70S ribosomes or polysomes). Required for efficient processing of 16S rRNA. May interact with the 5'-terminal helix region of 16S rRNA. The protein is Ribosome-binding factor A of Neisseria gonorrhoeae (strain NCCP11945).